Reading from the N-terminus, the 542-residue chain is Malolactic enzyme (542 aa).

The active-site Proton donor is the Tyr92. The active-site Proton acceptor is Lys165. Lys165 is a substrate binding site. Residues Glu236, Asp237, and Asp260 each coordinate Mn(2+). NAD(+) contacts are provided by residues Ala293–Ala296, Asn405, and Asn450. Asn450 serves as a coordination point for substrate.

Belongs to the malic enzymes family. In terms of assembly, homodimer. The cofactor is Mn(2+). It depends on NAD(+) as a cofactor.

It catalyses the reaction (S)-malate + H(+) = (S)-lactate + CO2. Its activity is regulated as follows. Oxamate, fructose-1,6-diphosphate and L-lactate act as non-competitive inhibitors, whereas succinate, citrate and tartrate isomers produce a competitive inhibition. In terms of biological role, involved in the malolactic fermentation (MLF) of wine, which results in a natural decrease in acidity and favorable changes in wine flavors. Catalyzes the decarboxylation of L-malate to L-lactate. The chain is Malolactic enzyme (mleS) from Leuconostoc mesenteroides.